The following is a 240-amino-acid chain: DNA repair protein RecO (240 aa).

Belongs to the RecO family.

Its function is as follows. Involved in DNA repair and RecF pathway recombination. This Pseudoalteromonas atlantica (strain T6c / ATCC BAA-1087) protein is DNA repair protein RecO.